A 258-amino-acid polypeptide reads, in one-letter code: Peptide methionine sulfoxide reductase A4, chloroplastic (258 aa).

Residues 1 to 53 (MQVLVVSPPLIAAASLSKPLNSLSKAALSFSRAKPICPFPQTSRRPISVYKSP) constitute a chloroplast transit peptide. Met-54 is modified (N-acetylmethionine). The disordered stretch occupies residues 62–89 (GFGSRPQAQADPSSAAIAQGPDDDVPSS). Ser-245 carries the post-translational modification Phosphoserine.

Belongs to the MsrA Met sulfoxide reductase family. As to expression, expressed in rosette and cauline leaves, and at lower levels in stems and flowers (at protein level).

The protein resides in the plastid. It localises to the chloroplast stroma. The enzyme catalyses L-methionyl-[protein] + [thioredoxin]-disulfide + H2O = L-methionyl-(S)-S-oxide-[protein] + [thioredoxin]-dithiol. It carries out the reaction [thioredoxin]-disulfide + L-methionine + H2O = L-methionine (S)-S-oxide + [thioredoxin]-dithiol. Its function is as follows. Catalyzes the reduction of methionine sulfoxide (MetSO) to methionine in proteins. Plays a protective role against oxidative stress by restoring activity to proteins that have been inactivated by methionine oxidation. Prevents the methionine sulfoxidation of the heat shock protein HSP21 and its subsequent inactivation. MSRA family specifically reduces the MetSO S-enantiomer. The chain is Peptide methionine sulfoxide reductase A4, chloroplastic (MSR4) from Arabidopsis thaliana (Mouse-ear cress).